The primary structure comprises 205 residues: Golgi to ER traffic protein 1 (205 aa).

Over 1–9 (MFELQPSSI) the chain is Lumenal. Residues 10–29 (VVLVFCVLAIKVCISLIGKT) traverse the membrane as a helical segment. Residues 30 to 116 (TIQDRIWYLY…QISKLVNLAI (87 aa)) lie on the Cytoplasmic side of the membrane. A coiled-coil region spans residues 53–103 (ALAQKREELVRVNKERRAISAQDEYAKWTKLNRQFDKLNSEVNDLAEATSS). A helical transmembrane segment spans residues 117 to 137 (AATTTAPIWFSRIWYRKVVLF). Topologically, residues 138–161 (YLPPKVFPYYIEWVLALPFIVTGG) are lumenal. The chain crosses the membrane as a helical span at residues 162 to 178 (VGLTVWMFALNSVLSSL). The Cytoplasmic segment spans residues 179–205 (EFLIKFYLEEPVKKPEAPAASEAQTKQ).

The protein belongs to the WRB/GET1 family. In terms of assembly, component of the Golgi to ER traffic (GET) complex, which is composed of GET1, GET2 and GET3. Within the complex, GET1 and GET2 form a heterotetramer which is stabilized by phosphatidylinositol binding and which binds to the GET3 homodimer.

It localises to the endoplasmic reticulum membrane. The protein resides in the golgi apparatus membrane. Its function is as follows. Required for the post-translational delivery of tail-anchored (TA) proteins to the endoplasmic reticulum. Together with GET2, acts as a membrane receptor for soluble GET3, which recognizes and selectively binds the transmembrane domain of TA proteins in the cytosol. The GET complex cooperates with the HDEL receptor ERD2 to mediate the ATP-dependent retrieval of resident ER proteins that contain a C-terminal H-D-E-L retention signal from the Golgi to the ER. The chain is Golgi to ER traffic protein 1 from Clavispora lusitaniae (strain ATCC 42720) (Yeast).